The chain runs to 144 residues: Interleukin-3 (144 aa).

The N-terminal stretch at 1-17 (MSSLSILHLLLLLLALH) is a signal peptide.

It belongs to the IL-3 family. In terms of assembly, monomer.

Its subcellular location is the secreted. Granulocyte/macrophage colony-stimulating factors are cytokines that act in hematopoiesis by controlling the production, differentiation, and function of 2 related white cell populations of the blood, the granulocytes and the monocytes-macrophages. Functionally, this CSF induces granulocytes, macrophages, mast cells, stem cells, erythroid cells, eosinophils and megakaryocytes. The sequence is that of Interleukin-3 (IL3) from Bos taurus (Bovine).